An 84-amino-acid polypeptide reads, in one-letter code: MPRDTIQYSEKYYDDKFEYRHVILPPDVAKEIPKNRLLSEGEWRGLGVQQSQGWVHYALHRPEPHILLFRREVPMPAASLSHNP.

Belongs to the CKS family. Monomer in solution; may form a homohexamer that can probably bind six kinase subunits.

In terms of biological role, binds to the catalytic subunit of the cyclin dependent kinases and is essential for their biological function. This chain is Probable cyclin-dependent kinases regulatory subunit, found in Physarum polycephalum (Slime mold).